Consider the following 231-residue polypeptide: Non-fluorescent flavoprotein (231 aa).

This sequence belongs to the bacterial luciferase oxidoreductase family. As to quaternary structure, homodimer. Requires FMN as cofactor.

This Photobacterium phosphoreum protein is Non-fluorescent flavoprotein (luxF).